The primary structure comprises 190 residues: Peptidyl-prolyl cis-trans isomerase A (190 aa).

The signal sequence occupies residues 1 to 23 (MSKRILAAVVTVLSLTAFSPAFA). A PPIase cyclophilin-type domain is found at 26–187 (TSTHVLLTTS…KPIVIQSAKI (162 aa)).

The protein belongs to the cyclophilin-type PPIase family.

The protein resides in the periplasm. It carries out the reaction [protein]-peptidylproline (omega=180) = [protein]-peptidylproline (omega=0). In terms of biological role, PPIases accelerate the folding of proteins. It catalyzes the cis-trans isomerization of proline imidic peptide bonds in oligopeptides. This Dickeya dadantii (strain 3937) (Erwinia chrysanthemi (strain 3937)) protein is Peptidyl-prolyl cis-trans isomerase A (rotA).